Reading from the N-terminus, the 201-residue chain is MELVLKDAQSALTVSETTFGRDFNEALVHQVVVAYAAGARQGTRAQKTRAEVTGSGKKPWRQKGTGRARAGSVKSPIWRSGGVTFAAKSQDHSQKVNKKMYRGALKSILSELVRQDRLIVVEQFSLEAPKTKLLAEKLKDMALEDVLIITGELEENLFLAARNLYKVDVRDAAGIDPVSLIAFDKVVMTADAVKQVEEMLA.

The tract at residues 51–73 (EVTGSGKKPWRQKGTGRARAGSV) is disordered.

It belongs to the universal ribosomal protein uL4 family. In terms of assembly, part of the 50S ribosomal subunit.

Functionally, one of the primary rRNA binding proteins, this protein initially binds near the 5'-end of the 23S rRNA. It is important during the early stages of 50S assembly. It makes multiple contacts with different domains of the 23S rRNA in the assembled 50S subunit and ribosome. In terms of biological role, forms part of the polypeptide exit tunnel. In Erwinia tasmaniensis (strain DSM 17950 / CFBP 7177 / CIP 109463 / NCPPB 4357 / Et1/99), this protein is Large ribosomal subunit protein uL4.